The primary structure comprises 108 residues: UPF0145 protein Tery_3795 (108 aa).

This sequence belongs to the UPF0145 family.

This Trichodesmium erythraeum (strain IMS101) protein is UPF0145 protein Tery_3795.